Consider the following 306-residue polypeptide: Probable thioesterase atnL (306 aa).

The protein belongs to the lcsJ thioesterase family.

Functionally, part of the gene cluster that mediates the biosynthesis of aspercryptins, linear lipopeptides built from six amino acids including 2 highly unusual and nonproteogenic amino acids, 2-amino-octanoic acid (2aoa) and 2-amino-dodecanol (2adol). The core structure of aspercryptins is as follows: Ser/Ala-Thr-Ile/Val-2aoa-Asn-2adol. The first step of aspercryptin biosynthesis is the generation of the fatty acid precursors, octanoic and dodecanoic acids, by the FAS subunits atnF and atnM. The fatty acid precursors are likely transformed into the corresponding alpha-amino fatty acids in three steps. First, they are hydroxylated by the cytochrome P450 monooxygenase atnE, then oxidized to the corresponding alpha-keto acids by the NAD(P)-dependent oxidoreductase atnD, and finally converted to the alpha-amino fatty acids by the PLP-dependent aminotransferases atnH or atnJ. the alpha-amino fatty acids, 2-amino-octanoic and 2-amino-dodecanoic acids, are recognized, activated, and covalently tethered to the NRPS atnA by its fourth and sixth adenylation domains. The second module of atnA is the Thr module and contains an epimerase (E) domain responsible for the epimerization of Thr to D-allo-Thr. Additionally, despite atnA having only one epimerase domain, the first amino acid of aspercryptin A1 is D-Ser, suggesting that serine is either loaded directly as D-Ser on the first module or that the epimerase domain in the threonine module epimerizes both L-Ser and L-Thr. After condensation of the hexapeptide of aspercryptin, the C-terminal reductase (TE) domain might be involved in the reductive release and production of the aldehyde hexapeptide. Further reduction would generate aspercryptins. The variety of aspercryptins produced reflects the flexibility of the atnA NRPS, allowing incorporation of alanine instead of serine, valine for isoleucine, and a C10 fatty amino alcohol instead of the C12 version. AtnB seems to be involved in the selectivity for Ile versus Val by the third module. Moreover, type B, C and D aspercryptins have an additional N-terminal cichorine, acetyl and propionyl group respectively. This is Probable thioesterase atnL from Emericella nidulans (strain FGSC A4 / ATCC 38163 / CBS 112.46 / NRRL 194 / M139) (Aspergillus nidulans).